A 153-amino-acid chain; its full sequence is MAANCERTFIAIKPDGVQRGLVGEIIKRFEQKGFRLVGMKFVHASEELLKQHYIDLKDRPFYPGLVKYMNSGPIVAMVWEGLNVVKTGRVMLGETNPADSKPGTIRGDFCIQVGRNIIHGSDSVESAQKEINLWFKPAELIDFKSCAHDWIYE.

ATP contacts are provided by K13, F61, R89, T95, R106, and N116. H119 (pros-phosphohistidine intermediate) is an active-site residue.

It belongs to the NDK family. Requires Mg(2+) as cofactor. As to expression, highest levels in the liver and kidney with lower levels in the heart, brain and breast muscle.

The protein resides in the cytoplasm. Its subcellular location is the cell membrane. The catalysed reaction is a 2'-deoxyribonucleoside 5'-diphosphate + ATP = a 2'-deoxyribonucleoside 5'-triphosphate + ADP. It carries out the reaction a ribonucleoside 5'-diphosphate + ATP = a ribonucleoside 5'-triphosphate + ADP. Functionally, major role in the synthesis of nucleoside triphosphates other than ATP. The ATP gamma phosphate is transferred to the NDP beta phosphate via a ping-pong mechanism, using a phosphorylated active-site intermediate. The sequence is that of Nucleoside diphosphate kinase from Columba livia (Rock dove).